The sequence spans 354 residues: MSRRQAISTTAMSQDLDQIVADAQAAFAAANDNATLENEKARFLGKTGALTELLKGLGKLDPETRKTEGARINQVKQQVEAALTARRQALADALMNARLSAEAIDVTLPGRAVSRGSLHPVMRTWERVEQIFGSIGFDVADGPEIETDWMNFTALNNPDNHPARSMQDTFYIDGRDSDDKLLLLRTHTSPMQVRYAKMHVEKYAGKAMPPIKVICPGRTYRVDSDATHSPMFNQVEGLWIGEDVSFADLKGVYTDFLRKFFERDDIQVRFRPSYFPFTEPSAEIDMAFGNGKWLEISGSGQVHPNVLRNMGLDPERYIGFAFGSGLERLTMLRYGINDLRLFFEGDVRFLRQFA.

E279 is a Mg(2+) binding site.

Belongs to the class-II aminoacyl-tRNA synthetase family. Phe-tRNA synthetase alpha subunit type 1 subfamily. Tetramer of two alpha and two beta subunits. Mg(2+) is required as a cofactor.

The protein localises to the cytoplasm. It catalyses the reaction tRNA(Phe) + L-phenylalanine + ATP = L-phenylalanyl-tRNA(Phe) + AMP + diphosphate + H(+). This is Phenylalanine--tRNA ligase alpha subunit from Cupriavidus pinatubonensis (strain JMP 134 / LMG 1197) (Cupriavidus necator (strain JMP 134)).